The primary structure comprises 205 residues: N-(5'-phosphoribosyl)anthranilate isomerase (205 aa).

It belongs to the TrpF family.

It catalyses the reaction N-(5-phospho-beta-D-ribosyl)anthranilate = 1-(2-carboxyphenylamino)-1-deoxy-D-ribulose 5-phosphate. It functions in the pathway amino-acid biosynthesis; L-tryptophan biosynthesis; L-tryptophan from chorismate: step 3/5. This Thiobacillus denitrificans (strain ATCC 25259 / T1) protein is N-(5'-phosphoribosyl)anthranilate isomerase.